We begin with the raw amino-acid sequence, 274 residues long: MPLLKAKPTSAGRRHVVQVVNPDLHKGAPYAPLLEKNSKSGGRNNNGRITTRHIGGGHKQHYRVIDFKRNKDGIPAKVERLEYDPNRSANIALVLYADGERRYILAPKGMKAGDAIQSGSGAPIKSGNTLPMRNIPVGTVVHAIEMKPGKGAQIARSAGAYAQILARDGNYVTLRLRSGEMRKVLSDCRATIGEVGNAEHMLRSLGKAGATRWRGIRPTVRGVAMNPVDHPHGGGEGRTSGGRHPVTPWGVPTKGKKTRSNKRTDKLIVRRRNK.

Disordered stretches follow at residues 28–54 and 223–265; these read APYA…TRHI and VAMN…KRTD. Residues 39–48 are compositionally biased toward low complexity; the sequence is KSGGRNNNGR.

The protein belongs to the universal ribosomal protein uL2 family. In terms of assembly, part of the 50S ribosomal subunit. Forms a bridge to the 30S subunit in the 70S ribosome.

One of the primary rRNA binding proteins. Required for association of the 30S and 50S subunits to form the 70S ribosome, for tRNA binding and peptide bond formation. It has been suggested to have peptidyltransferase activity; this is somewhat controversial. Makes several contacts with the 16S rRNA in the 70S ribosome. This chain is Large ribosomal subunit protein uL2, found in Alteromonas mediterranea (strain DSM 17117 / CIP 110805 / LMG 28347 / Deep ecotype).